A 287-amino-acid polypeptide reads, in one-letter code: ATP synthase gamma chain (287 aa).

Belongs to the ATPase gamma chain family. As to quaternary structure, F-type ATPases have 2 components, CF(1) - the catalytic core - and CF(0) - the membrane proton channel. CF(1) has five subunits: alpha(3), beta(3), gamma(1), delta(1), epsilon(1). CF(0) has three main subunits: a, b and c.

Its subcellular location is the cell inner membrane. In terms of biological role, produces ATP from ADP in the presence of a proton gradient across the membrane. The gamma chain is believed to be important in regulating ATPase activity and the flow of protons through the CF(0) complex. This chain is ATP synthase gamma chain, found in Xylella fastidiosa (strain M23).